Reading from the N-terminus, the 1077-residue chain is ATP-dependent helicase HRQ1 (1077 aa).

The Helicase ATP-binding domain occupies Ile-299 to Leu-483. Residue Thr-312–Ser-319 participates in ATP binding. The DEAH box motif lies at Asp-423–His-426. Residues Ile-521 to Leu-678 enclose the Helicase C-terminal domain.

This sequence belongs to the helicase family. HRQ1 subfamily. As to quaternary structure, forms heptamer rings. Interacts with RAD4. Mg(2+) is required as a cofactor.

The protein resides in the nucleus. The catalysed reaction is Couples ATP hydrolysis with the unwinding of duplex DNA by translocating in the 3'-5' direction.. It carries out the reaction ATP + H2O = ADP + phosphate + H(+). Helicase with 3'-5' helicase activity involved in genome stability. Functions in the RAD4-dependent nucleotide excision repair (NER) pathway and plays a critical role in DNA interstrand cross-link repair. Unwinds relatively long duplex DNA up to 120-bp and requires a long 3'-tail of at least 70 nucleotides for efficient unwinding of duplex DNA. Activity is significantly stimulated by a preexisting fork structure. Shows both processive helicase and DNA strand annealing activities. Affects telomere length by a non-catalytic mechanism, probably through inhibiting telomerase by competing with it for ssDNA binding. The chain is ATP-dependent helicase HRQ1 from Saccharomyces cerevisiae (strain ATCC 204508 / S288c) (Baker's yeast).